The sequence spans 305 residues: Ribonucleoside-diphosphate reductase small subunit (305 aa).

Residues Glu64, Glu94, and His97 each coordinate Fe cation. The active site involves Tyr101. A helical transmembrane segment spans residues 150–170 (VLIFYLIEGVFFISSFYCIGL). Residues Glu157, Glu191, and His194 each coordinate Fe cation.

The protein belongs to the ribonucleoside diphosphate reductase small chain family. Heterotetramer composed of a homodimer of the large subunit (R1) and a homodimer of the small subunit (R2). Larger multisubunit protein complex are also active, composed of (R1)n(R2)n. It depends on Fe cation as a cofactor.

It localises to the host membrane. It catalyses the reaction a 2'-deoxyribonucleoside 5'-diphosphate + [thioredoxin]-disulfide + H2O = a ribonucleoside 5'-diphosphate + [thioredoxin]-dithiol. Functionally, ribonucleoside-diphosphate reductase holoenzyme provides the precursors necessary for viral DNA synthesis. Allows virus growth in non-dividing cells, as well as reactivation from latency in infected hosts. Catalyzes the biosynthesis of deoxyribonucleotides from the corresponding ribonucleotides. The sequence is that of Ribonucleoside-diphosphate reductase small subunit from Alcelaphine herpesvirus 1 (strain C500) (AlHV-1).